Reading from the N-terminus, the 330-residue chain is WRKY transcription factor WRKY51 (330 aa).

The disordered stretch occupies residues 39 to 61 (QTGTSERSPAPAPAQEQQQQQQV). The segment covering 51–60 (PAQEQQQQQQ) has biased composition (low complexity). The Nuclear localization signal signature appears at 74-81 (FKKVISML). 2 disordered regions span residues 91–117 (RGPV…SAVS) and 302–330 (YEGE…LPLA). Low complexity predominate over residues 101–117 (PAASEPAPVRSSPSAVS). A DNA-binding region (WRKY) is located at residues 245–311 (KVADIPADDF…YEGEHRHTPS (67 aa)). Residues 318–330 (PPAPPPPLALPLA) show a composition bias toward pro residues.

The protein belongs to the WRKY group II-a family. In terms of tissue distribution, highly expressed in aleurone cells. In seeds, predominantly present in the plumule, radicle and scutellum of the embryo.

The protein resides in the nucleus. Functionally, transcription factor. Interacts, when in complex with WRKY71, specifically with the W box (5'-(T)TGAC[CT]-3'), a frequently occurring elicitor-responsive cis-acting element. Represses specifically gibberellic acid (GA)-induced promoters in aleurone cells, probably by interfering with GAM1. The chain is WRKY transcription factor WRKY51 from Oryza sativa subsp. indica (Rice).